The primary structure comprises 366 residues: Actin-like protein 8 (366 aa).

It belongs to the actin family. In terms of tissue distribution, strongly expressed in testis and pancreas. Weak expression in placenta.

It is found in the cytoplasm. It localises to the cytoskeleton. In Homo sapiens (Human), this protein is Actin-like protein 8 (ACTL8).